Consider the following 485-residue polypeptide: ATP-dependent 6-phosphofructokinase 7 (485 aa).

Residues glycine 101, 164–165 (RG), and 189–192 (GDGT) each bind ATP. Residue aspartate 190 coordinates Mg(2+). Substrate is bound by residues 218-220 (TID), 263-265 (MGR), glutamate 319, and 374-377 (YMIR). Aspartate 220 functions as the Proton acceptor in the catalytic mechanism. A disordered region spans residues 449–485 (SFLGPKDTSEEKKELPETPLLDDGAVDIPPVTKEVTK). The span at 455 to 464 (DTSEEKKELP) shows a compositional bias: basic and acidic residues.

This sequence belongs to the phosphofructokinase type A (PFKA) family. PPi-dependent PFK group II subfamily. Atypical ATP-dependent clade 'X' sub-subfamily. In terms of assembly, homotetramer. Mg(2+) is required as a cofactor. In terms of tissue distribution, expressed in roots, leaves, stems and flowers.

The protein resides in the cytoplasm. It carries out the reaction beta-D-fructose 6-phosphate + ATP = beta-D-fructose 1,6-bisphosphate + ADP + H(+). It participates in carbohydrate degradation; glycolysis; D-glyceraldehyde 3-phosphate and glycerone phosphate from D-glucose: step 3/4. Allosterically activated by AMP. In terms of biological role, catalyzes the phosphorylation of D-fructose 6-phosphate to fructose 1,6-bisphosphate by ATP, the first committing step of glycolysis. This chain is ATP-dependent 6-phosphofructokinase 7, found in Arabidopsis thaliana (Mouse-ear cress).